Consider the following 246-residue polypeptide: Probable transcriptional regulatory protein TM1040_1893 (246 aa).

A disordered region spans residues 1-21 (MAGHSKWANIQHRKGRQDAAR).

Belongs to the TACO1 family.

It is found in the cytoplasm. The protein is Probable transcriptional regulatory protein TM1040_1893 of Ruegeria sp. (strain TM1040) (Silicibacter sp.).